The chain runs to 946 residues: MPASPLPALSPPASPRRNTSGASALGSRKADIPPDAIRGFATVGSLVRSEHFAQHFDDDIAGKDQEQSRKKSPEDVGNIAATKKKPGKRAATTSTADGEAKPKPKPRARKPKAADEEAVIIDPELRLPAAKVSPFFAAEGAPAAIEPSDEPVVDVPKLTKAGKPRKPRAKKENVGGEEAVPKPKRTRVTKPKAAKAKAGGKSQEEACVESAHFRKSEDTGDETVAGVLATRKSATTENVGSGEASIWDVPQSPKPKKKRAPKKPPPDPVINNLELDEAVSRRRDWTPPRDTAIPSPFTDSVGKENKQIEPDADNGGFTHMISNFAYAQALPAQVASTVADSATGTMAATKRRRIELLDVPGNQTTSRNSSPEKGKAPKKKPRTITDIATEQYQHRAAQLDQSDVASDFFQSHTAVTKVPLNDASLPNGDAPTKKPPRKRSTSKPASEKEKVGSKARSKKASTKAAAKPKHIAEKLLSPGSALMRMNKQDILFGTSSQLALEEPPTLVRQLQHALKESEVEADLSSNGMIAPPPRWPKLDKVVGKRSLWDASSRDVEGGMLEHMEDVYIPEFDRTQDFPLLMDGTNDQPDGAPPSFADIDDFEPAPPVIISSDGPTPPPTTSRTSQRKANDEPDHVMEGPVFEDIDDFDFQPPPSNQNVEFQDSFADDDEILHTSVQSSTHPPPRLRPPATSDPMNGSSKKPRGCPAKSQSAIATSGSPAVAKEPKRTKGKEVKSAPAPPTTPAKGSGRFIDIDEILDSDDEALQALSPTPPRIHNFENSQPLPLYSVSPTRAKKPKADSSVDSKIVPVHIIPTAHLEWLNLKNSIFPSITSHIRSLPSTRDPSKPSWHEKILMYDPIVLEDFTAYLNAKTSLRTWRRATKIQSKAWNKAQKSIGAQEIGVVEGGGNVLAVEKELEAWQVQSWCESMSVCCIWGEGRGKGGVRKGFY.

The span at 1-14 shows a compositional bias: pro residues; that stretch reads MPASPLPALSPPAS. Disordered stretches follow at residues 1–35, 54–119, 147–318, 339–399, 416–471, 577–748, and 765–799; these read MPAS…IPPD, QHFD…EEAV, PSDE…GGFT, ADSA…AAQL, TKVP…PKHI, FPLL…GSGR, and ALSP…KADS. The span at 54–74 shows a compositional bias: basic and acidic residues; the sequence is QHFDDDIAGKDQEQSRKKSPE. Composition is skewed to basic residues over residues 160–169 and 182–195; these read KAGKPRKPRA and KPKR…KAAK. The segment covering 278–287 has biased composition (basic and acidic residues); that stretch reads AVSRRRDWTP. Basic residues predominate over residues 453 to 469; that stretch reads SKARSKKASTKAAAKPK. Over residues 627 to 636 the composition is skewed to basic and acidic residues; that stretch reads KANDEPDHVM. Residues 707–717 show a composition bias toward polar residues; the sequence is KSQSAIATSGS. Over residues 722–733 the composition is skewed to basic and acidic residues; it reads KEPKRTKGKEVK.

It belongs to the SLX4 family. In terms of assembly, forms a heterodimer with SLX1. Post-translationally, phosphorylated in response to DNA damage.

It is found in the nucleus. In terms of biological role, regulatory subunit of the SLX1-SLX4 structure-specific endonuclease that resolves DNA secondary structures generated during DNA repair and recombination. Has endonuclease activity towards branched DNA substrates, introducing single-strand cuts in duplex DNA close to junctions with ss-DNA. The polypeptide is Structure-specific endonuclease subunit SLX4 (Phaeosphaeria nodorum (strain SN15 / ATCC MYA-4574 / FGSC 10173) (Glume blotch fungus)).